The following is a 707-amino-acid chain: MFKVFRKEMMWGGRKLVLETGKVARQADGAVWASYGDTVVLATAVAAKAPKPGVDFFPLTVNYQEKAFAAGKIPGGFFKREGRPTEKEVLTSRLIDRPIRPLFADGYRNETQVIVTVLSHDLENDPDIVAMVATSAALTISGIPFLGPIGAARVGYKDGQFVLNPTLEQVEASDLDLVVAGTTEGVLMVESEAKELPEDVMLGAVMFGHREFQPVIDLIIDLAEMAAKDPMAIPAPAYDKDAVKTRMAALIGQDVRQAYTLTVKQERYAAIGAAKLKALETMVAEGTAPEAVASVFKELESDILRGSVIETGKRIDGRTTVDIRPIVSQVGVLPRAHGSALFTRGETQALVVATLGTNQDEQIVDALEGEYRESFMLHYNFPPYSVGEAGRMGSPGRREIGHGKLAWRAVRPLLPTKETFPYTIRVVSEITESNGSSSMATVCGSSLSMMDAGVPLPRPVAGIAMGLIKEGEKFAVLSDILGDEDHLGDMDFKVAGTEKGVTALQMDIKITSITEEIMKIALAQAKDGRVHILSEMNKALNTAREAVNQNAPRITVINIPKDKIRDVIGSGGKVIREIVEQTGAKIDIEDDGTVKVAAVDGKASEAAIKWIKGIVAEPEVGEIYEGKVVKIMDFGAFVNFLGSRDGLVHISELKNERVAKVTDVVKQGDAVKVKVLGFDDRGKVKLSMKVVDQTTGEDLSKKEEAEG.

D485 and D491 together coordinate Mg(2+). The KH domain occupies 552 to 615 (PRITVINIPK…AAIKWIKGIV (64 aa)). The 69-residue stretch at 621-689 (GEIYEGKVVK…DRGKVKLSMK (69 aa)) folds into the S1 motif domain.

It belongs to the polyribonucleotide nucleotidyltransferase family. Requires Mg(2+) as cofactor.

It is found in the cytoplasm. It carries out the reaction RNA(n+1) + phosphate = RNA(n) + a ribonucleoside 5'-diphosphate. Its function is as follows. Involved in mRNA degradation. Catalyzes the phosphorolysis of single-stranded polyribonucleotides processively in the 3'- to 5'-direction. The protein is Polyribonucleotide nucleotidyltransferase of Rhodospirillum centenum (strain ATCC 51521 / SW).